The following is a 522-amino-acid chain: Maturase K (522 aa).

Belongs to the intron maturase 2 family. MatK subfamily.

It is found in the plastid. Its subcellular location is the chloroplast. Functionally, usually encoded in the trnK tRNA gene intron. Probably assists in splicing its own and other chloroplast group II introns. The sequence is that of Maturase K from Iris sanguinea (Japanese iris).